A 383-amino-acid chain; its full sequence is Succinyl-diaminopimelate desuccinylase (383 aa).

His73 lines the Zn(2+) pocket. Asp75 is a catalytic residue. Asp107 is a binding site for Zn(2+). Glu141 (proton acceptor) is an active-site residue. Glu142, Glu170, and His356 together coordinate Zn(2+).

This sequence belongs to the peptidase M20A family. DapE subfamily. As to quaternary structure, homodimer. Requires Zn(2+) as cofactor. It depends on Co(2+) as a cofactor.

The enzyme catalyses N-succinyl-(2S,6S)-2,6-diaminopimelate + H2O = (2S,6S)-2,6-diaminopimelate + succinate. Its pathway is amino-acid biosynthesis; L-lysine biosynthesis via DAP pathway; LL-2,6-diaminopimelate from (S)-tetrahydrodipicolinate (succinylase route): step 3/3. Its function is as follows. Catalyzes the hydrolysis of N-succinyl-L,L-diaminopimelic acid (SDAP), forming succinate and LL-2,6-diaminopimelate (DAP), an intermediate involved in the bacterial biosynthesis of lysine and meso-diaminopimelic acid, an essential component of bacterial cell walls. This chain is Succinyl-diaminopimelate desuccinylase, found in Pseudomonas putida (strain ATCC 700007 / DSM 6899 / JCM 31910 / BCRC 17059 / LMG 24140 / F1).